A 434-amino-acid chain; its full sequence is ATP-sensitive inward rectifier potassium channel 14 (434 aa).

The Cytoplasmic portion of the chain corresponds to 1–81 (MGLARALRRL…LSDLFTTCVD (81 aa)). Cys79 carries the S-nitrosocysteine modification. The helical transmembrane segment at 82 to 108 (VRWRWMCLLFSCSFLASWLLFGLTFWL) threads the bilayer. Residues 109-131 (IASLHGDLAAPPPPAPCFSQVAS) lie on the Extracellular side of the membrane. Positions 132 to 148 (FLAAFLFALETQTSIGY) form an intramembrane region, helical; Pore-forming. Residues 145-150 (SIGYGV) carry the Selectivity filter motif. Topologically, residues 149–157 (GVRSVTEEC) are extracellular. A helical transmembrane segment spans residues 158–185 (PAAVAAVVLQCIAGCVLDAFVVGAVMAK). Over 186-434 (MAKPKKRNET…TPTLALTLPP (249 aa)) the chain is Cytoplasmic. The disordered stretch occupies residues 398–434 (QEEDEEEDTKEGTSAETPDRAASPQALTPTLALTLPP). The span at 407-416 (KEGTSAETPD) shows a compositional bias: basic and acidic residues. Over residues 418–434 (AASPQALTPTLALTLPP) the composition is skewed to low complexity.

This sequence belongs to the inward rectifier-type potassium channel (TC 1.A.2.1) family. KCNJ14 subfamily. As to expression, expressed predominantly in motoneurons of cranial nerve motor nuclei within the general somatic and special visceral motor cell column.

Its subcellular location is the membrane. The catalysed reaction is K(+)(in) = K(+)(out). Channel activity is regulated by variations of cytosolic pH; channels are activated by alkaline and inhibited by acidic pH values. Inhibited by Ba(2+) and Cs(+) in a voltage-dependent manner; sensitivity to those inhibitors is lower than in other Kir channels. Its function is as follows. Inward rectifier potassium channels are characterized by a greater tendency to allow potassium to flow into the cell rather than out of it. Their voltage dependence is regulated by the concentration of extracellular potassium; as external potassium is raised, the voltage range of the channel opening shifts to more positive voltages. The chain is ATP-sensitive inward rectifier potassium channel 14 (Kcnj14) from Rattus norvegicus (Rat).